Here is a 162-residue protein sequence, read N- to C-terminus: MQFDVTIEIPKGQRNKYEVDHKTGRVRLDRYLYTPMAYPTDYGFIEDTLGEDGDPLDALVLLPEPLFPGVLVEARPVGMFRMVDEHGGDDKVLCVPVNDHRWDHIHGIIDVPTFELDAIKHFFVHYKDLEPGKFVKAADWVGRDEAEAEVQRSVERFKAGGH.

Glutamate 8 contributes to the Mg(2+) binding site. Substrate-binding residues include lysine 16, arginine 30, and tyrosine 42. Mg(2+) contacts are provided by aspartate 52, aspartate 57, aspartate 84, and aspartate 89. Catalysis depends on aspartate 89, which acts as the Proton acceptor. Tyrosine 126 is a substrate binding site.

Belongs to the PPase family. As to quaternary structure, homohexamer. Requires Mg(2+) as cofactor.

Its subcellular location is the cytoplasm. It carries out the reaction diphosphate + H2O = 2 phosphate + H(+). Its function is as follows. Catalyzes the hydrolysis of inorganic pyrophosphate (PPi) forming two phosphate ions. The protein is Inorganic pyrophosphatase of Mycobacterium leprae (strain TN).